The primary structure comprises 1264 residues: MTARGKNVRIQSLATEDEIFVYDRRFVSEPENVELPELPSPEPFTPDTPPDTLTNQNDLQAWRNLYMARRSWALGLVERCGAMDKSIHEHNERTDIIHRAAGVALENLKTHVGNLENRFQEAQTWANDLLKEQRAALDGWQRALTTLESIPAPKVFPFLGRPSTPKEHRDRPTGTLRDFVDANEVQKAGAEAAAESSRFARQIDDVAEAVRGITADTQRLIDDQLPSGADAADGLQEMITFAKKISSDYEHVIALPNNQKTLANISRLALTHTQDLLPSMLDISAEIHAGLEEAVRRHNTAMKVALDHMRTISAIELRLADVQSQIINLNVQSDAFDVVFSVYHMPMVYGSILVESVRRREFNEKMKADSLTLAEEMAVFRDEEQRRRKKWLKSMGDFISLTETTTPGVEINLQGLDYEWPEVSRNDIESYIEHLKSRPAMASLADGLTQQYKDLDAPTRHQRRRAKAFKQGSIFDLSRSSLLLRSDDMLRSLREEKSKLEEKLKGSESRIRKLEDLLHRQSQLSRPVSGNFNLEFPSSPASPYPDELSRRSSVSSRRMSANQSSEDKTLAQRIVTLEAELNAERETVQRLQKEAHAERLSNTDKIQEAQSTKRDLIDNLEARQREFDEERRYLEGELKKYRLRTEELEEELDRITDSRDHAKQDADERINQLETELQNLHIHTEEELHRANDLLEQMQAQKMTEESLQQRINELEKQQSEIKATEQENLQTLQAAFMNLSPGGAVPAEIPSIIKAIEVLSEGLSIHVKNAEEKMAEAVAENKALEERMNQLETEVQDAKQSAEQRESELAQVRGELAQEKEKLAAVQSELHDERSKLNALQSQHADGDTGTDALRQRVVEDERKLGILSQRLAEVEAQARESEKEVCAWKNKLKAISESEREATTRIEIRGSRAKELSQQLFEQVEKMEHMLEQLGFTVIRQDGEIVVQRASKVNASSGIGDSLAQSGVVSVKPDPSLLDWMQAETAQEETDRYMAFLESLYQFDVDVFGDAVVKRVKDIELLARKWQKEARGYRDKYHRMQSEAHDKIAYRSFKEGDLALFLPTRNQAIRSWAAFNVGAPHYFLREQDAHKLQTRDWLLARITKIEERVVDLSKSMNGAHPDRRSIGGTSDAASIDDENPFELSDGLRWYLLDANEEKPGAPATPGLGKSTVAPAHVDARGSIRLKRTSNGGNVAKTLTKSLDSRRNSSSSKKGPPFAISQRANESTAELARPAEANTPLSPSAQEAASTPEEVRRDQLQGP.

Disordered stretches follow at residues 528 to 567, 1118 to 1140, and 1180 to 1264; these read VSGN…SSED, MNGA…IDDE, and DARG…LQGP. The segment covering 551–564 has biased composition (low complexity); the sequence is RSSVSSRRMSANQS. Positions 566–887 form a coiled coil; it reads EDKTLAQRIV…AQARESEKEV (322 aa). Composition is skewed to polar residues over residues 1190–1201 and 1240–1250; these read TSNGGNVAKTLT and TPLSPSAQEAA. The span at 1254 to 1264 shows a compositional bias: basic and acidic residues; it reads EEVRRDQLQGP.

This sequence belongs to the ATG11 family. In terms of assembly, homodimer.

It is found in the preautophagosomal structure membrane. The protein localises to the vacuole membrane. In terms of biological role, involved in cytoplasm to vacuole transport (Cvt), pexophagy, mitophagy and nucleophagy. Recruits mitochondria for their selective degradation via autophagy (mitophagy) during starvation. Works as scaffold proteins that recruit ATG proteins to the pre-autophagosome (PAS), the site of vesicle/autophagosome formation. Required for the Cvt vesicles completion. The chain is Autophagy-related protein 11 (atg11) from Aspergillus fumigatus (strain ATCC MYA-4609 / CBS 101355 / FGSC A1100 / Af293) (Neosartorya fumigata).